A 318-amino-acid chain; its full sequence is Probable plastid-lipid-associated protein 1, chloroplastic (318 aa).

The transit peptide at 1-55 directs the protein to the chloroplast; the sequence is MATVPLFTQFPCKTLNPSSSNTKHQSKSPILLPINSINRRSEIGVSVHRPDFKIR. A Phosphothreonine modification is found at threonine 57.

It belongs to the PAP/fibrillin family. In terms of assembly, interacts (via N-terminus) with ABI2. In terms of tissue distribution, expressed in flower buds. Detected in tapetal cells, endothecium and connective in anthers and in subepidermal cells in filaments.

The protein resides in the plastid. It localises to the chloroplast. The protein localises to the plastoglobule. Its subcellular location is the chloroplast thylakoid. In terms of biological role, probably involved in light/cold stress-related jasmonate (JA) biosynthesis. Contributes to the protection of photosystem II (PSII) against light stress. The protein is Probable plastid-lipid-associated protein 1, chloroplastic (PAP1) of Arabidopsis thaliana (Mouse-ear cress).